We begin with the raw amino-acid sequence, 574 residues long: Squalene monooxygenase (574 aa).

The Cytoplasmic portion of the chain corresponds to 1 to 20; the sequence is MWTFLGIATFTYFYKKFGDF. Residues 1–100 form an interaction with MARCHF6 region; the sequence is MWTFLGIATF…EQLEARRRRK (100 aa). An intramembrane segment occupies 21 to 41; the sequence is ITLANREVLLCVLVFLSLGLV. Over 42–574 the chain is Cytoplasmic; it reads LSYRCRHRNG…IYSEMKYMVH (533 aa). The required for degradation in response to high membrane cholesterol levels stretch occupies residues 62–73; the sequence is QFALFSDILSGL. Residues 118-574 are sufficient for enzyme activity; that stretch reads TSSQNDPEVI…IYSEMKYMVH (457 aa). Residues 133-134, 153-154, Arg-161, Phe-166, Arg-234, Val-250, Asp-408, and Met-421 contribute to the FAD site; these read VL and ER. The tract at residues 516 to 574 is hydrophobic; mediates interaction with membranes; it reads PLVLIGHFFAVAIYAVYFCFKSEPWITKPRALLSSGAVLYKACSVIFPLIYSEMKYMVH.

This sequence belongs to the squalene monooxygenase family. As to quaternary structure, interacts (via N-terminal domain) with MARCHF6. Interacts with SMIM22; this interaction modulates lipid droplet formation. It depends on FAD as a cofactor. Ubiquitinated by MARCHF6 in response to high cholesterol levels in intracellular membranes, leading to proteasomal degradation. As to expression, detected in liver (at protein level).

It is found in the microsome membrane. The protein localises to the endoplasmic reticulum membrane. The enzyme catalyses squalene + reduced [NADPH--hemoprotein reductase] + O2 = (S)-2,3-epoxysqualene + oxidized [NADPH--hemoprotein reductase] + H2O + H(+). It participates in terpene metabolism; lanosterol biosynthesis; lanosterol from farnesyl diphosphate: step 2/3. Inhibited by NB-598 ((E)N-ethyl-N-(6,6-dimethyl-2-hepten-4-ynyl)-3-[(3,3'-bi-thiophen-5-yl)methoxy]benzene-methanamine). Contrary to fungal enzymes, the mammalian enzyme is only slightly inhibited by terbinafine. Inhibited by tellurite, tellurium dioxide, selenite, and selenium dioxide. In terms of biological role, catalyzes the stereospecific oxidation of squalene to (S)-2,3-epoxysqualene, and is considered to be a rate-limiting enzyme in steroid biosynthesis. The sequence is that of Squalene monooxygenase (SQLE) from Homo sapiens (Human).